Consider the following 335-residue polypeptide: Serine protease 42 (335 aa).

The first 24 residues, Met1 to Ala24, serve as a signal peptide directing secretion. Residue Asn67 is glycosylated (N-linked (GlcNAc...) asparagine). The region spanning Ile79–Asn315 is the Peptidase S1 domain. Cys104 and Cys120 are disulfide-bonded. His119 serves as the catalytic Charge relay system. Asn140 carries N-linked (GlcNAc...) asparagine glycosylation. Asp165 serves as the catalytic Charge relay system. N-linked (GlcNAc...) asparagine glycosylation is present at Asn176. Intrachain disulfides connect Cys199-Cys273, Cys232-Cys253, and Cys263-Cys291. Ser267 acts as the Charge relay system in catalysis.

The protein belongs to the peptidase S1 family. Testis-specific. Mainly detected in round spermatids at all the eminiferous epithelial stages (at protein level).

It is found in the cytoplasm. The protein resides in the cell membrane. Its function is as follows. Plays a role in spermatogenesis. Involved in germ cell survival during meiosis. Lacks protease activity in vitro. In Mus musculus (Mouse), this protein is Serine protease 42.